The sequence spans 517 residues: Steroid 17-alpha-hydroxylase/17,20 lyase (517 aa).

Position 451 (cysteine 451) interacts with heme.

This sequence belongs to the cytochrome P450 family. Requires heme as cofactor.

The protein localises to the membrane. The enzyme catalyses a C21-steroid + reduced [NADPH--hemoprotein reductase] + O2 = a 17alpha-hydroxy-C21-steroid + oxidized [NADPH--hemoprotein reductase] + H2O + H(+). It catalyses the reaction 17alpha-hydroxyprogesterone + reduced [NADPH--hemoprotein reductase] + O2 = androst-4-ene-3,17-dione + acetate + oxidized [NADPH--hemoprotein reductase] + H2O + 2 H(+). The catalysed reaction is 17alpha-hydroxypregnenolone + reduced [NADPH--hemoprotein reductase] + O2 = 3beta-hydroxyandrost-5-en-17-one + acetate + oxidized [NADPH--hemoprotein reductase] + H2O + 2 H(+). The protein operates within lipid metabolism; steroid biosynthesis. Its function is as follows. Conversion of pregnenolone and progesterone to their 17-alpha-hydroxylated products and subsequently to dehydroepiandrosterone (DHEA) and androstenedione. Catalyzes both the 17-alpha-hydroxylation and the 17,20-lyase reaction. The protein is Steroid 17-alpha-hydroxylase/17,20 lyase (cyp17a1) of Oryzias latipes (Japanese rice fish).